An 80-amino-acid polypeptide reads, in one-letter code: Regulatory protein HrpD6 (80 aa).

Involved in the regulation of several genes of the hrp-hrc-hpa cluster, which encodes a type III secretion system (T3SS). Upregulates the expression of hpa2, hpa1 and hpaB and partially controls the expression of hrcC and hrcT. Controls the secretion of the T3SS TAL effector AvrXa27. Also regulates the expression of several HrpX-regulated protein (Xrp) genes. Has no influence on hrpG or hrpX expression. The sequence is that of Regulatory protein HrpD6 from Xanthomonas oryzae pv. oryzicola.